The sequence spans 115 residues: DNA-binding protein PYRAB09250 (115 aa).

This sequence belongs to the PDCD5 family.

The polypeptide is DNA-binding protein PYRAB09250 (Pyrococcus abyssi (strain GE5 / Orsay)).